The chain runs to 244 residues: Phosphoadenosine 5'-phosphosulfate reductase (244 aa).

Cys239 serves as the catalytic Nucleophile; cysteine thiosulfonate intermediate.

The protein belongs to the PAPS reductase family. CysH subfamily.

Its subcellular location is the cytoplasm. The catalysed reaction is [thioredoxin]-disulfide + sulfite + adenosine 3',5'-bisphosphate + 2 H(+) = [thioredoxin]-dithiol + 3'-phosphoadenylyl sulfate. Its pathway is sulfur metabolism; hydrogen sulfide biosynthesis; sulfite from sulfate: step 3/3. In terms of biological role, catalyzes the formation of sulfite from phosphoadenosine 5'-phosphosulfate (PAPS) using thioredoxin as an electron donor. This is Phosphoadenosine 5'-phosphosulfate reductase from Escherichia coli O6:K15:H31 (strain 536 / UPEC).